The chain runs to 120 residues: Protein BEX4 (120 aa).

Residues 1 to 54 form a disordered region; sequence MESKEELAANNLNGENAQQENEGGEQAPTQNEEESRHLGGGEGQKPGGNIRRGR. Residues 8-27 are compositionally biased toward low complexity; that stretch reads AANNLNGENAQQENEGGEQA. An interaction with SIRT2 region spans residues 31–90; it reads NEEESRHLGGGEGQKPGGNIRRGRVRRLVPNFRWAIPNRHIEHNEARDDVERFVGQMMEI. Residues 31-120 form an interaction with alpha-tubulin region; that stretch reads NEEESRHLGG…DNHYDFCLIP (90 aa). Position 117 (Cys117) interacts with Zn(2+).

It belongs to the BEX family. In terms of assembly, interacts with alpha-tubulin. Interacts with SIRT2. Ubiquitinated and degraded by the proteasome. As to expression, very high expression in heart, skeletal muscle, liver, and kidney. The levels of expression are uniform throughout the brain.

The protein resides in the cytoplasm. The protein localises to the cytoskeleton. It localises to the spindle pole. Its subcellular location is the nucleus. Functionally, may play a role in microtubule deacetylation by negatively regulating the SIRT2 deacetylase activity toward alpha-tubulin and thereby participate in the control of cell cycle progression and genomic stability. In absence of reductive stress, acts as a pseudosubstrate for the CRL2(FEM1B) complex: associates with FEM1B via zinc, thereby preventing association between FEM1B and its substrates. This chain is Protein BEX4, found in Homo sapiens (Human).